The chain runs to 192 residues: Glycerol-3-phosphate acyltransferase (192 aa).

Transmembrane regions (helical) follow at residues 4 to 24 (MFWLLATFAYLLGSLSFAILL), 54 to 74 (LAILTLLGDLCKGLLPILIAS), 80 to 100 (IAQQGWIGVCAVLGHLFPVYF), 112 to 132 (AGVLLGLYPPAAALAIAAWLL), and 154 to 174 (LLAWQEPHALLPMSVLTLLIV).

Belongs to the PlsY family. Probably interacts with PlsX.

The protein resides in the cell inner membrane. It catalyses the reaction an acyl phosphate + sn-glycerol 3-phosphate = a 1-acyl-sn-glycero-3-phosphate + phosphate. It functions in the pathway lipid metabolism; phospholipid metabolism. Functionally, catalyzes the transfer of an acyl group from acyl-phosphate (acyl-PO(4)) to glycerol-3-phosphate (G3P) to form lysophosphatidic acid (LPA). This enzyme utilizes acyl-phosphate as fatty acyl donor, but not acyl-CoA or acyl-ACP. This Pseudomonas savastanoi pv. phaseolicola (strain 1448A / Race 6) (Pseudomonas syringae pv. phaseolicola (strain 1448A / Race 6)) protein is Glycerol-3-phosphate acyltransferase.